The following is a 532-amino-acid chain: 2,3-bisphosphoglycerate-independent phosphoglycerate mutase (532 aa).

2 residues coordinate Mn(2+): aspartate 15 and serine 65. The active-site Phosphoserine intermediate is serine 65. Residues histidine 126, 156 to 157 (RD), arginine 188, arginine 194, 258 to 261 (RPDR), and lysine 331 each bind substrate. The Mn(2+) site is built by aspartate 398, histidine 402, aspartate 439, histidine 440, and histidine 457.

It belongs to the BPG-independent phosphoglycerate mutase family. Monomer. The cofactor is Mn(2+).

It catalyses the reaction (2R)-2-phosphoglycerate = (2R)-3-phosphoglycerate. The protein operates within carbohydrate degradation; glycolysis; pyruvate from D-glyceraldehyde 3-phosphate: step 3/5. Functionally, catalyzes the interconversion of 2-phosphoglycerate and 3-phosphoglycerate. In Gloeothece citriformis (strain PCC 7424) (Cyanothece sp. (strain PCC 7424)), this protein is 2,3-bisphosphoglycerate-independent phosphoglycerate mutase.